A 1531-amino-acid polypeptide reads, in one-letter code: La-related protein Larp4B (1531 aa).

A compositionally biased stretch (low complexity) spans 112–147; that stretch reads HTHVAHQQQQQQQQQTIQQHLHQQQQQQSPHPAQHL. Disordered regions lie at residues 112–148 and 239–263; these read HTHV…QHLT and QLPA…EPNI. The region spanning 262–351 is the HTH La-type RNA-binding domain; the sequence is NIPLDKLKQM…RPNRKRCIII (90 aa). The 76-residue stretch at 348–423 folds into the RRM domain; it reads CIIILREISN…KPIMARIKPK (76 aa). Disordered regions lie at residues 533 to 605, 710 to 736, 748 to 768, 791 to 1135, 1160 to 1211, and 1251 to 1285; these read PLPP…QGGN, AHSH…ASSS, TAPA…QQTQ, QEAG…SNQQ, DVVR…TPAL, and ASSK…QPSQ. Over residues 565–578 the composition is skewed to low complexity; that stretch reads YNNNHRGNPNNVGG. Low complexity-rich tracts occupy residues 754-768 and 810-826; these read QPGQ…QQTQ and SSNM…TSMS. The segment covering 860 to 884 has biased composition (polar residues); the sequence is SSPSNPHPQQHLMSSSTGSNVQSAG. Residues 945-959 are compositionally biased toward low complexity; sequence ALSSQQQQHHLTTGT. Residues 966 to 975 are compositionally biased toward basic residues; it reads HHYHHHHHHN. Over residues 983–1004 the composition is skewed to gly residues; sequence NSGGLGVSSGGSGGGGSGGGSG. Residues 1031 to 1045 show a composition bias toward low complexity; that stretch reads HQQQQQQQQQQQQQQ. Residues 1068–1086 show a composition bias toward polar residues; the sequence is TSATAPHTPQATGGASLHN. Residues 1087–1115 are compositionally biased toward low complexity; the sequence is STTSSSSSTGLGQKQTLHQQQQQAPQQHQ. S1123 bears the Phosphoserine mark. Gly residues predominate over residues 1164-1173; that stretch reads TGGGGGGGGK. Positions 1183 to 1200 are enriched in polar residues; that stretch reads PQGQNQPHMAPNYQQHQP. A compositionally biased stretch (basic and acidic residues) spans 1270 to 1280; sequence KSNKTEDEMHP. S1370 and S1413 each carry phosphoserine. Disordered stretches follow at residues 1393-1418 and 1450-1531; these read KAAA…TGSH and GGAS…ANNS. Polar residues-rich tracts occupy residues 1467–1477 and 1502–1515; these read ATNTTQGSSAV and QHYG…TNAN.

Functionally, probable RNA binding protein. Negatively regulates myc at the protein level, via an unknown mechanism, and may therefore have a role in growth. Has no effect on myc mRNA levels. This is La-related protein Larp4B from Drosophila melanogaster (Fruit fly).